Reading from the N-terminus, the 193-residue chain is MIYGSLDHGFIEVIVGPMFSGKSEELIRRIRRAQIAKQKVQVFKPAIDDRYSIDKVVSHNGSSINAISVTKASEILDLLEEDTQVVAIDEIQFFDHSLVDVVREIADMGKRVICAGLDMDFRGEPFGVTPDIMAIAESVDKLTAICVKCGNPATRTQRLINGKPAKYDDPIILVGAHETYEARCRKCHEVPRT.

ATP-binding positions include Gly16–Ser23 and Asp89–Gln92. Glu90 (proton acceptor) is an active-site residue. Zn(2+) contacts are provided by Cys146, Cys149, Cys184, and Cys187.

This sequence belongs to the thymidine kinase family. Homotetramer.

The protein localises to the cytoplasm. It catalyses the reaction thymidine + ATP = dTMP + ADP + H(+). This is Thymidine kinase from Caldanaerobacter subterraneus subsp. tengcongensis (strain DSM 15242 / JCM 11007 / NBRC 100824 / MB4) (Thermoanaerobacter tengcongensis).